Here is a 447-residue protein sequence, read N- to C-terminus: Ribulose bisphosphate carboxylase large chain (447 aa).

Lys5 carries the post-translational modification N6,N6,N6-trimethyllysine. Residues Asn114 and Thr164 each contribute to the substrate site. Lys166 serves as the catalytic Proton acceptor. Lys168 is a binding site for substrate. 3 residues coordinate Mg(2+): Lys192, Asp194, and Glu195. An N6-carboxylysine modification is found at Lys192. His285 acts as the Proton acceptor in catalysis. Substrate contacts are provided by Arg286, His318, and Ser370.

The protein belongs to the RuBisCO large chain family. Type I subfamily. Heterohexadecamer of 8 large chains and 8 small chains; disulfide-linked. The disulfide link is formed within the large subunit homodimers. Requires Mg(2+) as cofactor. The disulfide bond which can form in the large chain dimeric partners within the hexadecamer appears to be associated with oxidative stress and protein turnover.

It localises to the plastid. Its subcellular location is the chloroplast. It catalyses the reaction 2 (2R)-3-phosphoglycerate + 2 H(+) = D-ribulose 1,5-bisphosphate + CO2 + H2O. It carries out the reaction D-ribulose 1,5-bisphosphate + O2 = 2-phosphoglycolate + (2R)-3-phosphoglycerate + 2 H(+). Its function is as follows. RuBisCO catalyzes two reactions: the carboxylation of D-ribulose 1,5-bisphosphate, the primary event in carbon dioxide fixation, as well as the oxidative fragmentation of the pentose substrate in the photorespiration process. Both reactions occur simultaneously and in competition at the same active site. This is Ribulose bisphosphate carboxylase large chain from Camassia leichtlinii (Western quamash).